A 353-amino-acid polypeptide reads, in one-letter code: F-box protein At3g58530 (353 aa).

In terms of domain architecture, F-box; degenerate spans 8-56 (EEEEETWRREIVTSVMRLVSTRLPQTDLISLLLVSPWLYRTLISYPSIW).

This chain is F-box protein At3g58530, found in Arabidopsis thaliana (Mouse-ear cress).